Here is a 707-residue protein sequence, read N- to C-terminus: Zinc finger protein 60 (707 aa).

Positions 14–86 (VTFRDVAVDF…VKKETGRPSQ (73 aa)) constitute a KRAB domain. 19 C2H2-type zinc fingers span residues 173–195 (YKCK…ESIH), 201–223 (YECK…QKSH), 229–251 (FECN…KNIH), 257–282 (FECE…RTIH), 288–310 (YKCN…QKIH), 316–338 (FHCK…ENIH), 344–366 (FECK…YDTH), 372–394 (FECN…QKTH), 400–422 (FKCK…QRIH), 428–450 (YQCK…QSIH), 456–478 (FECK…QRFH), 484–506 (FECK…KTSH), 512–534 (FECK…RIIH), 540–562 (YKCN…EKIH), 568–590 (FECK…QTIH), 596–618 (YECE…QRIH), 624–646 (FQCK…ERIH), 652–674 (FQCK…FRIH), and 680–702 (YECS…QSIH).

Belongs to the krueppel C2H2-type zinc-finger protein family. Expressed widely and evenly in most adult mouse tissues.

The protein resides in the nucleus. May have a role during differentiation processes. The protein is Zinc finger protein 60 (Zfp60) of Mus musculus (Mouse).